The sequence spans 328 residues: Bypass of stop codon protein 1 (328 aa).

The 155-residue stretch at methionine 1 to glycine 155 folds into the Flo11 domain. 2 disordered regions span residues serine 168–serine 259 and threonine 286–threonine 328. Over residues threonine 291–threonine 328 the composition is skewed to low complexity.

The chain is Bypass of stop codon protein 1 (BSC1) from Saccharomyces cerevisiae (strain ATCC 204508 / S288c) (Baker's yeast).